A 272-amino-acid polypeptide reads, in one-letter code: Pyridoxal phosphate phosphatase YbhA (272 aa).

The Nucleophile role is filled by Asp9. Residue Asp9 coordinates Mg(2+). Leu10 is a phosphate binding site. Residue Asp11 coordinates Mg(2+). Residues 43–44 and Lys200 contribute to the phosphate site; that span reads TG. Asp223 serves as a coordination point for Mg(2+). Asn226 lines the phosphate pocket.

It belongs to the HAD-like hydrolase superfamily. CbbY/CbbZ/Gph/YieH family. It depends on Mg(2+) as a cofactor. The cofactor is Mn(2+). Co(2+) is required as a cofactor. Zn(2+) serves as cofactor.

The enzyme catalyses pyridoxal 5'-phosphate + H2O = pyridoxal + phosphate. Its function is as follows. Catalyzes the dephosphorylation of pyridoxal-phosphate (PLP). Can also hydrolyze erythrose-4-phosphate (Ery4P) and fructose-1,6-bis-phosphate (Fru1,6bisP). In Escherichia coli (strain K12), this protein is Pyridoxal phosphate phosphatase YbhA (ybhA).